The sequence spans 92 residues: Non-specific lipid-transfer protein 2 (92 aa).

Cystine bridges form between cysteine 4–cysteine 52, cysteine 14–cysteine 28, cysteine 29–cysteine 74, and cysteine 50–cysteine 88.

This sequence belongs to the plant LTP family. As to expression, expressed in seeds and, at very low levels, in pulp of fruit (at protein level).

In terms of biological role, plant non-specific lipid-transfer proteins transfer phospholipids as well as galactolipids across membranes. May play a role in wax or cutin deposition in the cell walls of expanding epidermal cells and certain secretory tissues. In Actinidia deliciosa (Kiwi), this protein is Non-specific lipid-transfer protein 2.